The chain runs to 318 residues: Endochitinase 3 (318 aa).

The signal sequence occupies residues 1–18 (EFTIFSLLFSLLLLNASA). Residues 19–60 (EQCGSQAGGALCAPGLCCSKFGWCGNTNDYCGPGNCQSQCPG) form the Chitin-binding type-1 domain. Intrachain disulfides connect C21–C36, C30–C42, C35–C49, C54–C58, C89–C152, C164–C172, and C271–C303. Catalysis depends on E134, which acts as the Proton donor. A propeptide spans 312–318 (GLLVDTV) (removed in mature form, vacuolar targeting).

It belongs to the glycosyl hydrolase 19 family. Chitinase class I subfamily.

Its subcellular location is the vacuole. It carries out the reaction Random endo-hydrolysis of N-acetyl-beta-D-glucosaminide (1-&gt;4)-beta-linkages in chitin and chitodextrins.. Defense against chitin-containing fungal pathogens. The chain is Endochitinase 3 (CHTB3) from Solanum tuberosum (Potato).